Consider the following 435-residue polypeptide: CBL-interacting protein kinase 28 (435 aa).

The Protein kinase domain maps to 11-265 (YVIGRQLGQG…ISRIKRSAWY (255 aa)). Residues 17–25 (LGQGTFGKV) and Lys40 contribute to the ATP site. The active-site Proton acceptor is Asp133. Residues 151–180 (DFGLSALAESRRQDGLLHTACGTPAYVAPE) form an activation loop region. Positions 283–329 (CTSEAPFSGPTICISSERNQEPPNLHNLNAFDIISLSTGFDLSGLFG) constitute an NAF domain. The interval 334 to 363 (RRESLFTSRKPAAAVLVKLKELAKALNLKV) is PPI.

Belongs to the protein kinase superfamily. CAMK Ser/Thr protein kinase family. SNF1 subfamily. Mn(2+) serves as cofactor.

The enzyme catalyses L-seryl-[protein] + ATP = O-phospho-L-seryl-[protein] + ADP + H(+). It carries out the reaction L-threonyl-[protein] + ATP = O-phospho-L-threonyl-[protein] + ADP + H(+). Its function is as follows. CIPK serine-threonine protein kinases interact with CBL proteins. Binding of a CBL protein to the regulatory NAF domain of CIPK protein lead to the activation of the kinase in a calcium-dependent manner. This chain is CBL-interacting protein kinase 28 (CIPK28), found in Oryza sativa subsp. japonica (Rice).